The following is a 447-amino-acid chain: Phosphoglucosamine mutase (447 aa).

Ser-108 (phosphoserine intermediate) is an active-site residue. Mg(2+)-binding residues include Ser-108, Asp-247, Asp-249, and Asp-251. A Phosphoserine modification is found at Ser-108.

The protein belongs to the phosphohexose mutase family. It depends on Mg(2+) as a cofactor. Activated by phosphorylation.

It catalyses the reaction alpha-D-glucosamine 1-phosphate = D-glucosamine 6-phosphate. Catalyzes the conversion of glucosamine-6-phosphate to glucosamine-1-phosphate. This is Phosphoglucosamine mutase from Bordetella avium (strain 197N).